Here is a 360-residue protein sequence, read N- to C-terminus: Cytochrome b-c1 complex subunit 2, mitochondrial (360 aa).

A mitochondrion-targeting transit peptide spans 1–15 (MLSSRLQFAQQTARK).

Belongs to the peptidase M16 family. UQCRC2/QCR2 subfamily. Component of the ubiquinol-cytochrome c oxidoreductase (cytochrome b-c1 complex, complex III, CIII), a multisubunit enzyme composed of 3 respiratory subunits cytochrome b, cytochrome c1 and Rieske protein, 2 core protein subunits, and additional low-molecular weight protein subunits. The complex exists as an obligatory dimer and forms supercomplexes (SCs) in the inner mitochondrial membrane with cytochrome c oxidase (complex IV, CIV).

It is found in the mitochondrion inner membrane. In terms of biological role, component of the ubiquinol-cytochrome c oxidoreductase, a multisubunit transmembrane complex that is part of the mitochondrial electron transport chain which drives oxidative phosphorylation. The respiratory chain contains 3 multisubunit complexes succinate dehydrogenase (complex II, CII), ubiquinol-cytochrome c oxidoreductase (cytochrome b-c1 complex, complex III, CIII) and cytochrome c oxidase (complex IV, CIV), that cooperate to transfer electrons derived from NADH and succinate to molecular oxygen, creating an electrochemical gradient over the inner membrane that drives transmembrane transport and the ATP synthase. The cytochrome b-c1 complex catalyzes electron transfer from ubiquinol to cytochrome c, linking this redox reaction to translocation of protons across the mitochondrial inner membrane, with protons being carried across the membrane as hydrogens on the quinol. In the process called Q cycle, 2 protons are consumed from the matrix, 4 protons are released into the intermembrane space and 2 electrons are passed to cytochrome c. The sequence is that of Cytochrome b-c1 complex subunit 2, mitochondrial (QCR2) from Kluyveromyces lactis (strain ATCC 8585 / CBS 2359 / DSM 70799 / NBRC 1267 / NRRL Y-1140 / WM37) (Yeast).